Reading from the N-terminus, the 120-residue chain is Large ribosomal subunit protein eL8 (120 aa).

It belongs to the eukaryotic ribosomal protein eL8 family. In terms of assembly, part of the 50S ribosomal subunit. Probably part of the RNase P complex.

The protein resides in the cytoplasm. Its function is as follows. Multifunctional RNA-binding protein that recognizes the K-turn motif in ribosomal RNA, the RNA component of RNase P, box H/ACA, box C/D and box C'/D' sRNAs. The chain is Large ribosomal subunit protein eL8 from Halobacterium salinarum (strain ATCC 29341 / DSM 671 / R1).